The sequence spans 973 residues: Nuclear factor NF-kappa-B p105 subunit (973 aa).

An RHD domain is found at 38–245 (ADGPYLQILE…DAIYDSKAPN (208 aa)). Cysteine 60 bears the S-nitrosocysteine; alternate mark. Cysteine 60 is lipidated: S-(15-deoxy-Delta12,14-prostaglandin J2-9-yl)cysteine; alternate. Lysine 324 participates in a covalent cross-link: Glycyl lysine isopeptide (Lys-Gly) (interchain with G-Cter in SUMO2). Serine 336 is subject to Phosphoserine. Residues 359–364 (QRKRQK) carry the Nuclear localization signal motif. The GRR stretch occupies residues 371-394 (DSFGGGSGAGAGGGGMFGSGGGGG). Positions 434–467 (TINTKFKNEPRDCAKSDDREILNPPEKETQGEGP) are disordered. Positions 435–973 (INTKFKNEPR…GQDGPIEGKI (539 aa)) are interaction with CFLAR. Over residues 439–463 (FKNEPRDCAKSDDREILNPPEKETQ) the composition is skewed to basic and acidic residues. At lysine 440 the chain carries N6-acetyllysine. Serine 449 carries the post-translational modification Phosphoserine. ANK repeat units lie at residues 540 to 570 (NGDS…SISD), 579 to 608 (LYQT…DLSL), 612 to 641 (WGNS…AALL), 648 to 677 (EGLN…EVNA), 682 to 711 (SGRT…ALVD), and 716 to 745 (DGTT…DPLV). The interval 648–682 (EGLNAIHIAVMSNSLSCLQLLVAAGAEVNAQEQKS) is essential for interaction with HIF1AN. Asparagine 676 is subject to (3S)-3-hydroxyasparagine; by HIF1AN. Serine 757 carries the post-translational modification Phosphoserine. The stretch at 769 to 799 (PGTTPLDMAANWQVFDILNGKPYEPVFTSDD) is one ANK 7 repeat. Residues 803-890 (QGDIKQLTED…EAIEVIQAAF (88 aa)) enclose the Death domain. Position 898 is a phosphoserine (serine 898). Serine 912 carries the post-translational modification Phosphoserine; by GSK3-beta; in vitro. Phosphoserine is present on serine 928. Phosphoserine; by IKKB is present on residues serine 932 and serine 937. Serine 942 carries the phosphoserine modification. Threonine 948 is subject to Phosphothreonine.

Component of the NF-kappa-B p65-p50 complex. Homodimer; component of the NF-kappa-B p50-p50 complex. Component of the NF-kappa-B p105-p50 complex. Component of the NF-kappa-B p50-c-Rel complex. Component of a complex consisting of the NF-kappa-B p50-p50 homodimer and BCL3. Also interacts with MAP3K8. NF-kappa-B p50 subunit interacts with NCOA3 coactivator, which may coactivate NF-kappa-B dependent expression via its histone acetyltransferase activity. Interacts with TSC22D3; this interaction prevents nuclear translocation and DNA-binding. Interacts with SPAG9 and UNC5CL. NFKB1/p105 interacts with CFLAR; the interaction inhibits p105 processing into p50. NFKB1/p105 forms a ternary complex with MAP3K8 and TNIP2. Interacts with GSK3B; the interaction prevents processing of p105 to p50. NFKB1/p50 interacts with NFKBIE. NFKB1/p50 interacts with NFKBIZ. Nuclear factor NF-kappa-B p50 subunit interacts with NFKBID. Directly interacts with MEN1. Interacts with HIF1AN. Interacts with FEM1A; interaction is direct. Post-translationally, generation of the NF-kappa-B p50 (Nuclear factor NF-kappa-B p50 subunit) transcription factor takes place both cotranslationally and post-translationally via non-mutually exclusive mechanisms. A cotranslational processing allows the production of both p50 and p105 (Nuclear factor NF-kappa-B p105 subunit) from a single NFKB1 mRNA. While translation occurs, the particular unfolded structure after the GRR repeat region acts as a substrate for the proteasome, promoting degradation of the C-terminus. The GRR acts as a proteasomal 'stop signal', protecting the region upstream of the GRR from degradation and promoting generation of p50. It is unclear if limited proteasome degradation during cotranslational processing depends on ubiquitination. NF-kappa-B p50 is also generated post-translationally following ubiquitination by the KPC complex, leading to limited processing by the proteasome downstream of the GRR region, thereby generating p50. Phosphorylation at the C-terminus by IKBKB/IKKB acts as a signal for ubiquitination and promotes either complete degradation or processing to generate the NF-kappa-B p50 (Nuclear factor NF-kappa-B p50 subunit). Phosphorylation at Ser-912 primes p105 for proteolytic processing in response to TNF-alpha stimulation. Phosphorylation at Ser-928, Ser-932 and Ser-937 are required for BTRC/BTRCP-mediated ubiquitination and proteolysis. Phosphorylation at Ser-932 is also required for ubiquitination by the KPC complex and limited processing to generate NF-kappa-B p50 (Nuclear factor NF-kappa-B p50 subunit). In terms of processing, polyubiquitinated at multiple Lys residues in the C-terminus. Polyubiquitinated by the SCF(FBXW11) and SCF(BTRC) complexes following phosphorylation at Ser-928, Ser-932 and Ser-937, leading to its complete degradation. In contrast, polyubiquitination by the KPC complex following phosphorylation at Ser-932 leads to limited proteosomal processing and generation of the active NF-kappa-B p50 (Nuclear factor NF-kappa-B p50 subunit). Post-translationally, S-nitrosylation of Cys-60 affects DNA binding. The covalent modification of cysteine by 15-deoxy-Delta12,14-prostaglandin-J2 is autocatalytic and reversible. It may occur as an alternative to other cysteine modifications, such as S-nitrosylation and S-palmitoylation.

The protein localises to the cytoplasm. Its subcellular location is the nucleus. NF-kappa-B is a pleiotropic transcription factor present in almost all cell types and is the endpoint of a series of signal transduction events that are initiated by a vast array of stimuli related to many biological processes such as inflammation, immunity, differentiation, cell growth, tumorigenesis and apoptosis. NF-kappa-B is a homo- or heterodimeric complex formed by the Rel-like domain-containing proteins RELA/p65, RELB, NFKB1/p105, NFKB1/p50, REL and NFKB2/p52 and the heterodimeric p65-p50 complex appears to be most abundant one. The dimers bind at kappa-B sites in the DNA of their target genes and the individual dimers have distinct preferences for different kappa-B sites that they can bind with distinguishable affinity and specificity. Different dimer combinations act as transcriptional activators or repressors, respectively. NF-kappa-B is controlled by various mechanisms of post-translational modification and subcellular compartmentalization as well as by interactions with other cofactors or corepressors. NF-kappa-B complexes are held in the cytoplasm in an inactive state complexed with members of the NF-kappa-B inhibitor (I-kappa-B) family. In a conventional activation pathway, I-kappa-B is phosphorylated by I-kappa-B kinases (IKKs) in response to different activators, subsequently degraded thus liberating the active NF-kappa-B complex which translocates to the nucleus. NF-kappa-B heterodimeric p65-p50 and RelB-p50 complexes are transcriptional activators. The NF-kappa-B p50-p50 homodimer is a transcriptional repressor, but can act as a transcriptional activator when associated with BCL3. NFKB1 appears to have dual functions such as cytoplasmic retention of attached NF-kappa-B proteins by p105 and generation of p50 by a cotranslational processing. The proteasome-mediated process ensures the production of both p50 and p105 and preserves their independent function, although processing of NFKB1/p105 also appears to occur post-translationally. p50 binds to the kappa-B consensus sequence 5'-GGRNNYYCC-3', located in the enhancer region of genes involved in immune response and acute phase reactions. In a complex with MAP3K8, NFKB1/p105 represses MAP3K8-induced MAPK signaling; active MAP3K8 is released by proteasome-dependent degradation of NFKB1/p105. Its function is as follows. P105 is the precursor of the active p50 subunit (Nuclear factor NF-kappa-B p50 subunit) of the nuclear factor NF-kappa-B. Acts as a cytoplasmic retention of attached NF-kappa-B proteins by p105. Functionally, constitutes the active form, which associates with RELA/p65 to form the NF-kappa-B p65-p50 complex to form a transcription factor. Together with RELA/p65, binds to the kappa-B consensus sequence 5'-GGRNNYYCC-3', located in the enhancer region of genes involved in immune response and acute phase reactions. The polypeptide is Nuclear factor NF-kappa-B p105 subunit (Nfkb1) (Rattus norvegicus (Rat)).